Consider the following 444-residue polypeptide: UDP-N-acetylmuramate--L-alanine ligase (444 aa).

110–116 is an ATP binding site; it reads GAHGKTS.

The protein belongs to the MurCDEF family.

It is found in the cytoplasm. The enzyme catalyses UDP-N-acetyl-alpha-D-muramate + L-alanine + ATP = UDP-N-acetyl-alpha-D-muramoyl-L-alanine + ADP + phosphate + H(+). The protein operates within cell wall biogenesis; peptidoglycan biosynthesis. In terms of biological role, cell wall formation. This chain is UDP-N-acetylmuramate--L-alanine ligase, found in Streptococcus sanguinis (strain SK36).